The chain runs to 533 residues: Calcium uptake protein 1 homolog, mitochondrial (533 aa).

A mitochondrion-targeting transit peptide spans 1 to 13 (MLRHNFRSSIFIR). The tract at residues 127–147 (PFRPEASQKEESTDSGTEIEV) is disordered. EF-hand domains are found at residues 270–305 (TSHA…IMSQ), 337–358 (KDGK…LQHD), and 465–500 (LSDH…RMRR). Residues Asp-283, Asp-285, Asn-287, and Glu-294 each coordinate Ca(2+).

This sequence belongs to the MICU1 family. MICU1 subfamily.

It is found in the mitochondrion intermembrane space. Its subcellular location is the mitochondrion inner membrane. Calcium sensor of the mitochondrial calcium uniporter (mcu-1) channel, which senses calcium level via its EF-hand domains. At low calcium levels, micu-1 occludes the pore of the mcu-1 channel, preventing mitochondrial calcium uptake. At higher calcium levels, calcium-binding to micu-1 induces a conformational change that weakens mcu-1-micu-1 interactions and moves micu-1 away from the pore, allowing calcium permeation through the mcu-1 channel. Also required to protect against manganese toxicity by preventing manganese uptake by mcu-1. Modulates the activity of the mitochondrial calcium uniporter protein mcu-1 depending on the level of intracellular calcium in PLM touch receptor neurons following axonal injury. This chain is Calcium uptake protein 1 homolog, mitochondrial, found in Caenorhabditis briggsae.